The following is a 273-amino-acid chain: MSFDINWEQLRNDSNLNRTVTEKLNGYLTSINLPSYVNNLRIERFSMGDRPPKVTLRQITDPVQDFYDAINEELQMSAEEETEGSDDEGYGGDRVRNRGIDTQTVFPSANDVQFLVEMEYNGNMSITVTAEMVLNYPSKKFMALPIRLTISNIGFHTLCLIAFLSKQLFFSFLCDVTDPILDEDDSILDQNGPLLSSKGPLERISIIRSLSISTEVGEEYQGDGSVLKSVGKLEQFLKEKLKDFLRKEVAWPSWINFDFYEPEDNESDDNQIN.

In terms of domain architecture, SMP-LTD spans 1-260 (MSFDINWEQL…WPSWINFDFY (260 aa)). The disordered stretch occupies residues 76–98 (MSAEEETEGSDDEGYGGDRVRNR). The span at 78–90 (AEEETEGSDDEGY) shows a compositional bias: acidic residues.

The protein belongs to the MDM12 family. As to quaternary structure, component of the ER-mitochondria encounter structure (ERMES) or MDM complex, composed of MMM1, MDM10, MDM12 and MDM34. An MMM1 homodimer associates with one molecule of MDM12 on each side in a pairwise head-to-tail manner, and the SMP-LTD domains of MMM1 and MDM12 generate a continuous hydrophobic tunnel for phospholipid trafficking.

The protein resides in the mitochondrion outer membrane. Its subcellular location is the endoplasmic reticulum membrane. Its function is as follows. Component of the ERMES/MDM complex, which serves as a molecular tether to connect the endoplasmic reticulum (ER) and mitochondria. Components of this complex are involved in the control of mitochondrial shape and protein biogenesis, and function in nonvesicular lipid trafficking between the ER and mitochondria. MDM12 is required for the interaction of the ER-resident membrane protein MMM1 and the outer mitochondrial membrane-resident beta-barrel protein MDM10. The MDM12-MMM1 subcomplex functions in the major beta-barrel assembly pathway that is responsible for biogenesis of all mitochondrial outer membrane beta-barrel proteins, and acts in a late step after the SAM complex. The MDM10-MDM12-MMM1 subcomplex further acts in the TOM40-specific pathway after the action of the MDM12-MMM1 complex. Essential for establishing and maintaining the structure of mitochondria and maintenance of mtDNA nucleoids. The sequence is that of Mitochondrial distribution and morphology protein 12 from Vanderwaltozyma polyspora (strain ATCC 22028 / DSM 70294 / BCRC 21397 / CBS 2163 / NBRC 10782 / NRRL Y-8283 / UCD 57-17) (Kluyveromyces polysporus).